Reading from the N-terminus, the 406-residue chain is Mitochondrial ribosome-associated GTPase 2 (406 aa).

Residues 15 to 406 form a localized in the mitochondria region; that stretch reads FQGVGHWALS…LGQGRQPLRW (392 aa). A not localized in the mitochondria region spans residues 30–406; the sequence is KPSRLLPQRA…LGQGRQPLRW (377 aa). In terms of domain architecture, Obg spans 70–224; that stretch reads RYFVDYRRVL…RVLHLELKTV (155 aa). An OBG-type G domain is found at 225-390; sequence AHAGMVGFPN…LLLHLKVLYD (166 aa). GTP is bound by residues 231–238, 256–260, 278–281, 345–348, and 371–373; these read GFPNAGKS, FTTLK, DIPG, NKID, and SAL. Mg(2+) contacts are provided by Ser-238 and Thr-258.

This sequence belongs to the TRAFAC class OBG-HflX-like GTPase superfamily. OBG GTPase family. Associates with the mitochondrial ribosome large subunit; the association occurs in a GTP-dependent manner. Requires Mg(2+) as cofactor.

The protein resides in the mitochondrion. Its subcellular location is the mitochondrion inner membrane. In terms of biological role, plays a role in the regulation of the mitochondrial ribosome assembly and of translational activity. Displays GTPase activity. Involved in the ribosome maturation process. This Homo sapiens (Human) protein is Mitochondrial ribosome-associated GTPase 2 (MTG2).